The chain runs to 828 residues: Glycerol-3-phosphate acyltransferase 1, mitochondrial (828 aa).

At 1–87 (MEESSVTIGT…FFNPSIPSLG (87 aa)) the chain is on the cytoplasmic side. The important for mitochondrial localization stretch occupies residues 80-120 (NPSIPSLGLRNVIYINETHTRHRGWLARRLSYILFVQERDV). The stretch at 88 to 118 (LRNVIYINETHTRHRGWLARRLSYILFVQER) is an intramembrane region. The Cytoplasmic segment spans residues 119–828 (DVHKGMFATS…LEYILSFVVL (710 aa)). The HXXXXD motif signature appears at 230–235 (HRSHID). Positions 278, 279, 288, 293, and 328 each coordinate CoA. Phosphoserine is present on S380. CoA is bound at residue R462. Phosphoserine occurs at positions 688 and 695. An N6-acetyllysine mark is found at K780 and K784.

This sequence belongs to the GPAT/DAPAT family.

Its subcellular location is the mitochondrion outer membrane. The catalysed reaction is sn-glycerol 3-phosphate + an acyl-CoA = a 1-acyl-sn-glycero-3-phosphate + CoA. The enzyme catalyses sn-glycerol 3-phosphate + hexadecanoyl-CoA = 1-hexadecanoyl-sn-glycero-3-phosphate + CoA. It carries out the reaction (9Z,12Z)-octadecadienoyl-CoA + sn-glycerol 3-phosphate = 1-(9Z,12Z)-octadecadienoyl-sn-glycero-3-phosphate + CoA. It catalyses the reaction sn-glycerol 3-phosphate + (9Z)-octadecenoyl-CoA = 1-(9Z-octadecenoyl)-sn-glycero-3-phosphate + CoA. The catalysed reaction is sn-glycerol 3-phosphate + octadecanoyl-CoA = 1-octadecanoyl-sn-glycero-3-phosphate + CoA. The enzyme catalyses dodecanoyl-CoA + sn-glycerol 3-phosphate = 1-dodecanoyl-sn-glycerol 3-phosphate + CoA. It carries out the reaction 1-acyl-sn-glycero-3-phospho-(1'-sn-glycerol) + an acyl-CoA = a 1,2-diacyl-sn-glycero-3-phospho-(1'-sn-glycerol) + CoA. It functions in the pathway phospholipid metabolism; CDP-diacylglycerol biosynthesis; CDP-diacylglycerol from sn-glycerol 3-phosphate: step 1/3. Functionally, mitochondrial membrane protein that catalyzes the essential first step of biosynthesis of glycerolipids such as triglycerides, phosphatidic acids and lysophosphatidic acids. Esterifies acyl-group from acyl-coenzyme A (acyl-CoA) to the sn-1 position of glycerol-3-phosphate, to produce lysophosphatidic acid. Has a narrow hydrophobic binding cleft that selects for a linear acyl chain. Catalytic activity is higher for substrates with a 16-carbon acyl chain. The chain is Glycerol-3-phosphate acyltransferase 1, mitochondrial from Rattus norvegicus (Rat).